A 409-amino-acid chain; its full sequence is Dual-specificity RNA methyltransferase RlmN (409 aa).

Catalysis depends on E126, which acts as the Proton acceptor. One can recognise a Radical SAM core domain in the interval 132 to 373 (EEGRGTLCLS…NQAGYASPIR (242 aa)). A disulfide bridge links C139 with C384. The [4Fe-4S] cluster site is built by C146, C150, and C153. S-adenosyl-L-methionine contacts are provided by residues 210-211 (GE), S242, 264-266 (SLH), and N341. C384 acts as the S-methylcysteine intermediate in catalysis.

The protein belongs to the radical SAM superfamily. RlmN family. [4Fe-4S] cluster is required as a cofactor.

The protein localises to the cytoplasm. It carries out the reaction adenosine(2503) in 23S rRNA + 2 reduced [2Fe-2S]-[ferredoxin] + 2 S-adenosyl-L-methionine = 2-methyladenosine(2503) in 23S rRNA + 5'-deoxyadenosine + L-methionine + 2 oxidized [2Fe-2S]-[ferredoxin] + S-adenosyl-L-homocysteine. It catalyses the reaction adenosine(37) in tRNA + 2 reduced [2Fe-2S]-[ferredoxin] + 2 S-adenosyl-L-methionine = 2-methyladenosine(37) in tRNA + 5'-deoxyadenosine + L-methionine + 2 oxidized [2Fe-2S]-[ferredoxin] + S-adenosyl-L-homocysteine. Its function is as follows. Specifically methylates position 2 of adenine 2503 in 23S rRNA and position 2 of adenine 37 in tRNAs. m2A2503 modification seems to play a crucial role in the proofreading step occurring at the peptidyl transferase center and thus would serve to optimize ribosomal fidelity. The polypeptide is Dual-specificity RNA methyltransferase RlmN (Bartonella quintana (strain Toulouse) (Rochalimaea quintana)).